Reading from the N-terminus, the 125-residue chain is Putative glutaredoxin-C2 (125 aa).

One can recognise a Glutaredoxin domain in the interval 2–103 (AERVARLSSQ…PLLREAGALW (102 aa)). A disulfide bond links Cys-22 and Cys-25.

It belongs to the glutaredoxin family. CC-type subfamily.

Its subcellular location is the cytoplasm. Its function is as follows. Has a glutathione-disulfide oxidoreductase activity in the presence of NADPH and glutathione reductase. Reduces low molecular weight disulfides and proteins. The sequence is that of Putative glutaredoxin-C2 (GRXC2) from Oryza sativa subsp. japonica (Rice).